A 375-amino-acid polypeptide reads, in one-letter code: Succinyl-diaminopimelate desuccinylase (375 aa).

Histidine 66 provides a ligand contact to Zn(2+). Residue aspartate 68 is part of the active site. Aspartate 99 is a Zn(2+) binding site. The active-site Proton acceptor is glutamate 133. Positions 134, 162, and 348 each coordinate Zn(2+).

The protein belongs to the peptidase M20A family. DapE subfamily. In terms of assembly, homodimer. It depends on Zn(2+) as a cofactor. Requires Co(2+) as cofactor.

The enzyme catalyses N-succinyl-(2S,6S)-2,6-diaminopimelate + H2O = (2S,6S)-2,6-diaminopimelate + succinate. Its pathway is amino-acid biosynthesis; L-lysine biosynthesis via DAP pathway; LL-2,6-diaminopimelate from (S)-tetrahydrodipicolinate (succinylase route): step 3/3. In terms of biological role, catalyzes the hydrolysis of N-succinyl-L,L-diaminopimelic acid (SDAP), forming succinate and LL-2,6-diaminopimelate (DAP), an intermediate involved in the bacterial biosynthesis of lysine and meso-diaminopimelic acid, an essential component of bacterial cell walls. The protein is Succinyl-diaminopimelate desuccinylase of Methylobacillus flagellatus (strain ATCC 51484 / DSM 6875 / VKM B-1610 / KT).